The following is a 239-amino-acid chain: Ribonuclease HII (239 aa).

The RNase H type-2 domain occupies 18-231; that stretch reads KIIVGLDEAG…SKNLLKEIEE (214 aa). A divalent metal cation-binding residues include aspartate 24, glutamate 25, and aspartate 125.

The protein belongs to the RNase HII family. Mn(2+) serves as cofactor. Mg(2+) is required as a cofactor.

It localises to the cytoplasm. The catalysed reaction is Endonucleolytic cleavage to 5'-phosphomonoester.. In terms of biological role, endonuclease that specifically degrades the RNA of RNA-DNA hybrids. This is Ribonuclease HII from Methanococcus maripaludis (strain C6 / ATCC BAA-1332).